A 460-amino-acid polypeptide reads, in one-letter code: Fumarate hydratase class II (460 aa).

Substrate contacts are provided by residues 95-97 (SGT), 126-129 (HPND), 136-138 (SSN), and threonine 184. Histidine 185 (proton donor/acceptor) is an active-site residue. Serine 315 is an active-site residue. Residues serine 316 and 321-323 (KIN) each bind substrate.

The protein belongs to the class-II fumarase/aspartase family. Fumarase subfamily. As to quaternary structure, homotetramer.

It is found in the cytoplasm. The enzyme catalyses (S)-malate = fumarate + H2O. The protein operates within carbohydrate metabolism; tricarboxylic acid cycle; (S)-malate from fumarate: step 1/1. Its function is as follows. Involved in the TCA cycle. Catalyzes the stereospecific interconversion of fumarate to L-malate. This is Fumarate hydratase class II from Chlamydia caviae (strain ATCC VR-813 / DSM 19441 / 03DC25 / GPIC) (Chlamydophila caviae).